Consider the following 56-residue polypeptide: MAFHLLNLFLSAGTSSEAATSSAVGMIGSFLAAGALIVAPAAAALIWVSQKDALSR.

Residues isoleucine 27 to tryptophan 47 form a helical membrane-spanning segment.

Belongs to the PsbX family. Type 2 subfamily. PSII consists of a core antenna complex that captures photons, and an electron transfer chain that converts photonic excitation into a charge separation. PSII forms dimeric complexes.

Its subcellular location is the cellular thylakoid membrane. Its function is as follows. Involved in the binding and/or turnover of quinones at the Q(B) site of Photosystem II. The sequence is that of Photosystem II reaction center X protein from Prochlorococcus marinus (strain NATL2A).